The chain runs to 381 residues: MVQILHISDTHLGKRQYSLVEREKDIYDIFSQLVDIAIKEHVDVIIHSGDLFDVSSPTTNALVMAIKILKRLKDVNIPFLSIPGDHDTPKRKGYLIPHNILSELDLIKILNYEKPYIIKGIEVYGIPHIPTVSKSILVSALSALRPKSSRSILLLHQGVKQILPYDGSWQMELGSLPKGFGYYALGHIHTRWRLTQDDGSVIAIAGSPDIMREEEIEGYEKFGKGAYLIDFSKDLPILSTINITVRPQKVVTINTKNIKKDILTIRDDLIEHNKSENNKPILHIIVEGERMRKDLLYKELLPLNDVALYYRIYKDETTQTVDNLSYTLPRDKGLDKIIIEYLTKYEKFSEDEANLILQMIKNVESDEIVNEILKKLTGVNL.

Positions 9, 11, 50, and 85 each coordinate Mn(2+). The active-site Proton donor is the histidine 86. Mn(2+) is bound by residues histidine 156, histidine 187, and histidine 189.

The protein belongs to the MRE11/RAD32 family. As to quaternary structure, homodimer. Forms a heterotetramer composed of two Mre11 subunits and two Rad50 subunits. The cofactor is Mn(2+).

With respect to regulation, nuclease activity is regulated by Rad50. Part of the Rad50/Mre11 complex, which is involved in the early steps of DNA double-strand break (DSB) repair. The complex may facilitate opening of the processed DNA ends to aid in the recruitment of HerA and NurA. Mre11 binds to DSB ends and has both double-stranded 3'-5' exonuclease activity and single-stranded endonuclease activity. This is DNA double-strand break repair protein Mre11 from Saccharolobus solfataricus (strain ATCC 35092 / DSM 1617 / JCM 11322 / P2) (Sulfolobus solfataricus).